Reading from the N-terminus, the 351-residue chain is Peptide chain release factor 1 (351 aa).

The residue at position 230 (Gln230) is an N5-methylglutamine.

It belongs to the prokaryotic/mitochondrial release factor family. Methylated by PrmC. Methylation increases the termination efficiency of RF1.

Its subcellular location is the cytoplasm. Its function is as follows. Peptide chain release factor 1 directs the termination of translation in response to the peptide chain termination codons UAG and UAA. This chain is Peptide chain release factor 1, found in Onion yellows phytoplasma (strain OY-M).